The following is a 228-amino-acid chain: uncharacterized protein (228 aa).

The region spanning 99 to 207 (LANKVPFVVC…PKIKVGKPFI (109 aa)) is the tRNA-binding domain.

This is an uncharacterized protein from Mycoplasma genitalium (strain ATCC 33530 / DSM 19775 / NCTC 10195 / G37) (Mycoplasmoides genitalium).